The sequence spans 158 residues: C-type lectin BML-2 (158 aa).

Positions 1 to 23 (MGHFTFTGLCLLAMFLSLRGAEC) are cleaved as a signal peptide. 4 disulfide bridges follow: Cys-26/Cys-37, Cys-54/Cys-154, Cys-61/Cys-156, and Cys-129/Cys-146. Residues 33 to 155 (KNGLCYKVFS…CESLHPFLCQ (123 aa)) form the C-type lectin domain. A Mannose-binding motif is present at residues 119–121 (EPN). Residue Asn-121 is glycosylated (N-linked (GlcNAc...) asparagine). Ca(2+) is bound by residues Glu-127, Asn-142, and Asp-143.

It belongs to the true venom lectin family. In terms of assembly, dimer. Probably non-covalently linked. In terms of tissue distribution, expressed by the venom gland.

The protein resides in the secreted. In terms of biological role, recombinant C-type lectin BML-2 is able to agglutinate erythrocytes. May be a calcium-dependent lectin. The polypeptide is C-type lectin BML-2 (Bungarus multicinctus (Many-banded krait)).